The primary structure comprises 209 residues: uncharacterized protein (209 aa).

The N-terminal stretch at 1–19 (MGYFPYLAVFVCLLASGDA) is a signal peptide. N-linked (GlcNAc...) asparagine glycosylation is found at Asn41 and Asn109.

In terms of tissue distribution, component of the acid-soluble organic matrix of prismatic shell layers (at protein level).

It localises to the secreted. This is an uncharacterized protein from Haliotis asinina (Donkey's ear abalone).